The sequence spans 747 residues: Histone-lysine N-methyltransferase EZH1 (747 aa).

The segment at 186-229 is disordered; the sequence is YSDEDEEGHNDTSDGKQDDSKEDLPVTRKRKRHAIEGSKKSSKK. The segment covering 194–211 has biased composition (basic and acidic residues); that stretch reads HNDTSDGKQDDSKEDLPV. A Glycyl lysine isopeptide (Lys-Gly) (interchain with G-Cter in SUMO2) cross-link involves residue lysine 327. The disordered stretch occupies residues 375–421; the sequence is TSASAVAETKEGDSDRDTGNDWASSSSEANSRCQTPTKQKASPAPPQ. A compositionally biased stretch (basic and acidic residues) spans 382–393; it reads ETKEGDSDRDTG. Residues 395 to 414 show a composition bias toward polar residues; sequence DWASSSSEANSRCQTPTKQK. The region spanning 504 to 606 is the CXC domain; it reads CRKIQLKKDN…CKVVSCKNCS (103 aa). An SET domain is found at 613–728; it reads KHLLLAPSDV…AGEELFFDYR (116 aa).

It belongs to the class V-like SAM-binding methyltransferase superfamily. Histone-lysine methyltransferase family. EZ subfamily. As to quaternary structure, component of the PRC2/EED-EZH1 complex, which includes EED, EZH1, SUZ12, RBBP4 and AEBP2. The PRC2/EED-EZH1 is less abundant than the PRC2/EED-EZH2 complex, has weak methyltransferase activity and compacts chromatin in the absence of the methyltransferase cofactor S-adenosyl-L-methionine (SAM). Interacts with EZHIP; the interaction blocks EZH1 methyltransferase activity.

The protein localises to the nucleus. The catalysed reaction is L-lysyl(27)-[histone H3] + 3 S-adenosyl-L-methionine = N(6),N(6),N(6)-trimethyl-L-lysyl(27)-[histone H3] + 3 S-adenosyl-L-homocysteine + 3 H(+). In terms of biological role, polycomb group (PcG) protein. Catalytic subunit of the PRC2/EED-EZH1 complex, which methylates 'Lys-27' of histone H3, leading to transcriptional repression of the affected target gene. Able to mono-, di- and trimethylate 'Lys-27' of histone H3 to form H3K27me1, H3K27me2 and H3K27me3, respectively. Required for embryonic stem cell derivation and self-renewal, suggesting that it is involved in safeguarding embryonic stem cell identity. Compared to EZH2-containing complexes, it is less abundant in embryonic stem cells, has weak methyltransferase activity and plays a less critical role in forming H3K27me3, which is required for embryonic stem cell identity and proper differentiation. This is Histone-lysine N-methyltransferase EZH1 (EZH1) from Bos taurus (Bovine).